A 339-amino-acid chain; its full sequence is UDP-galactose transporter homolog 1 (339 aa).

The Lumenal segment spans residues 1–4; the sequence is MAGS. Residues 5-25 form a helical membrane-spanning segment; that stretch reads TSSLVICAIGIYATFLTWALV. The Cytoplasmic segment spans residues 26–42; that stretch reads QEPLATRTWPNSMGKFQ. A helical transmembrane segment spans residues 43 to 63; that stretch reads FPNVISLIQASVAMMMGYLYL. Residues 64 to 106 are Lumenal-facing; the sequence is NWKKVEYPPRKMIKDHWKQLMLISFTQSSSGPLATTSLKHVDY. The helical transmembrane segment at 107 to 127 threads the bilayer; the sequence is LTYMLAKSCKMIPVLLVHLLL. The Cytoplasmic portion of the chain corresponds to 128–136; the sequence is YRTPIASQK. A helical membrane pass occupies residues 137 to 157; it reads KVVALLVSLGVTIFTIGGNDG. The Lumenal portion of the chain corresponds to 158 to 174; that stretch reads KKLKRSFNESGNDNKLQ. An N-linked (GlcNAc...) asparagine glycan is attached at asparagine 165. A helical membrane pass occupies residues 175-192; that stretch reads GFGLLFSSLFLDGLTNAT. Over 193-214 the chain is Cytoplasmic; it reads QDKLLKANKAKEKGKQTLITGA. A helical membrane pass occupies residues 215–235; it reads HLMFTLNLFVILWNILYFIVI. The Lumenal segment spans residues 236–245; the sequence is DCKQWDNAVS. The helical transmembrane segment at 246 to 266 threads the bilayer; that stretch reads VLTMDPQVWGYLMLYSFCGAM. The Cytoplasmic segment spans residues 267 to 280; sequence GQCFIFYTLEQFGS. Residues 281–303 form a helical membrane-spanning segment; it reads LVLIMITVTRKMVSMILSIIVFG. The Lumenal segment spans residues 304-307; sequence KSVR. A helical transmembrane segment spans residues 308-327; the sequence is FQQWVGMFIVFGGITWEALN. At 328 to 339 the chain is on the cytoplasmic side; it reads KKKANIPKAKSA.

The protein belongs to the nucleotide-sugar transporter family. SLC35B subfamily.

It is found in the endoplasmic reticulum membrane. Functionally, may be involved in specific transport of UDP-Gal from the cytosol to the Golgi lumen. Involved in the maintenance of optimal conditions for the folding of secretory pathway proteins in the endoplasmic reticulum. Overexpression confers resistance to the immunosuppressive drug, leflunomide. This Saccharomyces cerevisiae (strain ATCC 204508 / S288c) (Baker's yeast) protein is UDP-galactose transporter homolog 1 (HUT1).